Here is a 173-residue protein sequence, read N- to C-terminus: Disulfide bond formation protein B (173 aa).

The Cytoplasmic segment spans residues 1–11 (MNALQWSFRAQ). Residues 12-28 (CLTGFLFCTGLLAYAIF) form a helical membrane-spanning segment. Over 29–46 (LQLHQGLEPCPLCIFQRI) the chain is Periplasmic. C38 and C41 are joined by a disulfide. Residues 47 to 63 (AFAVLGILFLIAGLYNS) form a helical membrane-spanning segment. The Cytoplasmic portion of the chain corresponds to 64–70 (SNVYTRK). Residues 71–88 (AYGLLIFLTAAIGTGIAG) form a helical membrane-spanning segment. At 89-145 (RHVWVQLMPHNTISSCGSPLSFLSETMGPFEVFRTVLTGTSDCGNIDWRFLGLSMPM) the chain is on the periplasmic side. A disulfide bond links C104 and C131. Residues 146–164 (WSMFWFVALALLGLLVGFK) traverse the membrane as a helical segment. Residues 165 to 173 (AERRKPLFS) lie on the Cytoplasmic side of the membrane.

This sequence belongs to the DsbB family.

The protein localises to the cell inner membrane. Functionally, required for disulfide bond formation in some periplasmic proteins. Acts by oxidizing the DsbA protein. The chain is Disulfide bond formation protein B from Xylella fastidiosa (strain 9a5c).